A 277-amino-acid polypeptide reads, in one-letter code: Energy-coupling factor transporter ATP-binding protein EcfA1 (277 aa).

Positions 5 to 242 constitute an ABC transporter domain; sequence VKVNNISFEY…IKMLKEIGLD (238 aa). 41–48 lines the ATP pocket; that stretch reads GHNGSGKS.

Belongs to the ABC transporter superfamily. Energy-coupling factor EcfA family. Forms a stable energy-coupling factor (ECF) transporter complex composed of 2 membrane-embedded substrate-binding proteins (S component), 2 ATP-binding proteins (A component) and 2 transmembrane proteins (T component).

It localises to the cell membrane. ATP-binding (A) component of a common energy-coupling factor (ECF) ABC-transporter complex. Unlike classic ABC transporters this ECF transporter provides the energy necessary to transport a number of different substrates. This Clostridioides difficile (strain 630) (Peptoclostridium difficile) protein is Energy-coupling factor transporter ATP-binding protein EcfA1.